A 1268-amino-acid polypeptide reads, in one-letter code: Vigilin (1268 aa).

The residue at position 2 (Ser2) is an N-acetylserine. The residue at position 8 (Thr8) is a Phosphothreonine. Phosphoserine is present on residues Ser11, Ser31, and Ser35. 14 KH domains span residues 158 to 229 (PKEH…RLEV), 230 to 302 (EKAF…AVEV), 303 to 371 (KKSQ…SVAA), 372 to 442 (PSWL…EINI), 443 to 514 (DHKF…DLII), 515 to 588 (EQRF…SVPI), 589 to 660 (FKQF…EVSI), 661 to 734 (PAKL…DIRA), 735 to 807 (KPEY…SMLV), 808 to 880 (DPKH…ECAI), 881 to 979 (PQKF…EVEV), 980 to 1059 (PFDL…SVTV), 1060 to 1134 (DPKY…DVPL), and 1135 to 1209 (DHRV…ALQV). Thr295 and Thr296 each carry phosphothreonine. Position 317 is a phosphoserine (Ser317). A Phosphotyrosine modification is found at Tyr437. At Ser645 the chain carries Phosphoserine. Residues 914–944 (ENAVHSTEPVVQENGDEAGEGREAKDCDPGS) form a disordered region. Positions 932-944 (GEGREAKDCDPGS) are enriched in basic and acidic residues. Lys991 carries the N6-acetyllysine modification. Positions 1233–1268 (WTASSSEKAPDMSSSEEFPSFGAQVAPKTLPWGPKR) are disordered. Residues 1234–1249 (TASSSEKAPDMSSSEE) show a composition bias toward polar residues. Residues Ser1247 and Ser1252 each carry the phosphoserine modification.

It localises to the cytoplasm. Its subcellular location is the nucleus. In terms of biological role, appears to play a role in cell sterol metabolism. It may function to protect cells from over-accumulation of cholesterol. The sequence is that of Vigilin (HDLBP) from Homo sapiens (Human).